Consider the following 81-residue polypeptide: Cytochrome b559 subunit alpha (81 aa).

A helical membrane pass occupies residues 21-35; that stretch reads VIHALTIPALFLAGW. Residue His-23 participates in heme binding.

This sequence belongs to the PsbE/PsbF family. In terms of assembly, heterodimer of an alpha subunit and a beta subunit. PSII is composed of 1 copy each of membrane proteins PsbA, PsbB, PsbC, PsbD, PsbE, PsbF, PsbH, PsbI, PsbJ, PsbK, PsbL, PsbM, PsbT, PsbX, PsbY, PsbZ, Psb30/Ycf12, peripheral proteins PsbO, CyanoQ (PsbQ), PsbU, PsbV and a large number of cofactors. It forms dimeric complexes. Heme b is required as a cofactor.

The protein localises to the cellular thylakoid membrane. Functionally, this b-type cytochrome is tightly associated with the reaction center of photosystem II (PSII). PSII is a light-driven water:plastoquinone oxidoreductase that uses light energy to abstract electrons from H(2)O, generating O(2) and a proton gradient subsequently used for ATP formation. It consists of a core antenna complex that captures photons, and an electron transfer chain that converts photonic excitation into a charge separation. This chain is Cytochrome b559 subunit alpha, found in Synechococcus sp. (strain JA-3-3Ab) (Cyanobacteria bacterium Yellowstone A-Prime).